The sequence spans 53 residues: Abaecin (53 aa).

The first 19 residues, M1 to A19, serve as a signal peptide directing secretion.

Its subcellular location is the secreted. In terms of biological role, this peptide has bactericidal activity. The sequence is that of Abaecin from Apis mellifera (Honeybee).